We begin with the raw amino-acid sequence, 213 residues long: Putative amidate substrates transporter protein (213 aa).

The next 6 membrane-spanning stretches (helical) occupy residues 4–20 (VGLF…GLML), 32–48 (LNFF…TVLI), 56–72 (AVIF…FTYL), 116–132 (VIWL…FLLL), 146–162 (VAVA…AFLI), and 172–188 (LPAA…VVLA).

Belongs to the AmiS/UreI family.

It is found in the cell membrane. Functionally, possible transporter that might be responsible for the adsorption of amidase substrates or release of their hydrolysis products. In Mycolicibacterium smegmatis (Mycobacterium smegmatis), this protein is Putative amidate substrates transporter protein.